The chain runs to 355 residues: Acidic fibroblast growth factor intracellular-binding protein B (355 aa).

As to quaternary structure, interacts with IER2.

It is found in the nucleus. The protein localises to the endomembrane system. Its function is as follows. Mediates with IER2 FGF-signaling in Kupffer's vesicle ciliogenesis and in the establishment of laterality in the embryo. May be involved in mitogenic function of FGF1. The sequence is that of Acidic fibroblast growth factor intracellular-binding protein B from Danio rerio (Zebrafish).